Reading from the N-terminus, the 446-residue chain is Eukaryotic translation initiation factor 3 subunit E (446 aa).

The region spanning 256-425 (TDLFFSPAYI…GTVIMNHPPQ (170 aa)) is the PCI domain.

The protein belongs to the eIF-3 subunit E family. Component of the eukaryotic translation initiation factor 3 (eIF-3) complex.

Its subcellular location is the cytoplasm. In terms of biological role, component of the eukaryotic translation initiation factor 3 (eIF-3) complex, which is involved in protein synthesis of a specialized repertoire of mRNAs and, together with other initiation factors, stimulates binding of mRNA and methionyl-tRNAi to the 40S ribosome. The eIF-3 complex specifically targets and initiates translation of a subset of mRNAs involved in cell proliferation. This chain is Eukaryotic translation initiation factor 3 subunit E (int6), found in Aspergillus terreus (strain NIH 2624 / FGSC A1156).